Here is an 86-residue protein sequence, read N- to C-terminus: MKPGIHPEYGPVVFRDRSTGTQFLTRSTATSEERVEWSDGNSYPLIVVDVTSASHPFWTGGRQVLDTQGRVEKFRRRYGDRARGGQ.

This sequence belongs to the bacterial ribosomal protein bL31 family. Type B subfamily. In terms of assembly, part of the 50S ribosomal subunit.

This is Large ribosomal subunit protein bL31B from Saccharopolyspora erythraea (strain ATCC 11635 / DSM 40517 / JCM 4748 / NBRC 13426 / NCIMB 8594 / NRRL 2338).